The chain runs to 321 residues: Basic endochitinase A (321 aa).

Positions 1–19 are cleaved as a signal peptide; the sequence is MGAFALFAVLAMAVTMAVA. In terms of domain architecture, Chitin-binding type-1 spans 20–60; sequence EQCGSQAGGATCPNCLCCSRFGWCGSTSDYCGDGCQSQCAG. 5 disulfide bridges follow: Cys22–Cys37, Cys31–Cys43, Cys34–Cys61, Cys36–Cys50, and Cys54–Cys58. The segment at 62–79 is hinge region (Gly/Pro/Thr-rich); sequence GGGGTPVTPTPTPSGGGG. A catalytic region spans residues 80–321; sequence VSSIVSRALF…LDCYNQRPFA (242 aa). 3 disulfides stabilise this stretch: Cys101–Cys163, Cys175–Cys183, and Cys301–Cys314. Glu145 acts as the Proton donor in catalysis.

Belongs to the glycosyl hydrolase 19 family. Chitinase class I subfamily. Localized in the aleurone cells of the seed endosperm (at protein level).

It catalyses the reaction Random endo-hydrolysis of N-acetyl-beta-D-glucosaminide (1-&gt;4)-beta-linkages in chitin and chitodextrins.. Defense against chitin-containing fungal pathogens. Binds the hyphal tips, lateral walls and septa of fungi and degrades mature chitin. The sequence is that of Basic endochitinase A from Secale cereale (Rye).